Consider the following 269-residue polypeptide: 4-hydroxy-tetrahydrodipicolinate reductase (269 aa).

Residues 11-16 and glutamate 37 each bind NAD(+); that span reads GASGRM. Position 38 (arginine 38) interacts with NADP(+). Residues 101–103 and 125–128 contribute to the NAD(+) site; these read GTT and AGNM. Residue histidine 158 is the Proton donor/acceptor of the active site. (S)-2,3,4,5-tetrahydrodipicolinate is bound at residue histidine 159. Lysine 162 serves as the catalytic Proton donor. 168 to 169 contributes to the (S)-2,3,4,5-tetrahydrodipicolinate binding site; sequence GT.

It belongs to the DapB family.

It localises to the cytoplasm. The catalysed reaction is (S)-2,3,4,5-tetrahydrodipicolinate + NAD(+) + H2O = (2S,4S)-4-hydroxy-2,3,4,5-tetrahydrodipicolinate + NADH + H(+). It catalyses the reaction (S)-2,3,4,5-tetrahydrodipicolinate + NADP(+) + H2O = (2S,4S)-4-hydroxy-2,3,4,5-tetrahydrodipicolinate + NADPH + H(+). The protein operates within amino-acid biosynthesis; L-lysine biosynthesis via DAP pathway; (S)-tetrahydrodipicolinate from L-aspartate: step 4/4. Its function is as follows. Catalyzes the conversion of 4-hydroxy-tetrahydrodipicolinate (HTPA) to tetrahydrodipicolinate. This is 4-hydroxy-tetrahydrodipicolinate reductase from Cereibacter sphaeroides (strain ATCC 17023 / DSM 158 / JCM 6121 / CCUG 31486 / LMG 2827 / NBRC 12203 / NCIMB 8253 / ATH 2.4.1.) (Rhodobacter sphaeroides).